The primary structure comprises 336 residues: MSVTDAELLEIREKLVKDETSEALILAKKAADKSPKEDGRAFELLGEVYAELADVKKARSAFKEAVSRSKNLTNDQGYEKYLWLAQINDNGSKALKLYQKGVTILERLLIDKGEDADLKKKIQGAYCSIAELFMTDLCMQPDAEENCELYTKLALQIDATNAEALQTLASMRISQQKIEEAKDALSKCLQSISRAATEDSVDLPTYAVRTSIVRLLIEVEMHEEAHQLLVYLQKEDDQILDIWYLLGWNCYVEAQNLQEQGNGSEEEIKELLMNAKFYFISALGVYQKIGWDDEGIKSHIQELLEILNGLGVPNMDEENEEAEWETSENEEEMDED.

TPR repeat units lie at residues 39-72, 75-108, 110-143, and 162-195; these read GRAFELLGEVYAELADVKKARSAFKEAVSRSKNL, DQGYEKYLWLAQINDNGSKALKLYQKGVTILERL, IDKGEDADLKKKIQGAYCSIAELFMTDLCMQPDA, and AEALQTLASMRISQQKIEEAKDALSKCLQSISRA. The disordered stretch occupies residues 316-336; the sequence is DEENEEAEWETSENEEEMDED.

It belongs to the ACL4 family.

It localises to the cytoplasm. The protein resides in the nucleus. The protein localises to the nucleolus. In terms of biological role, acts as a chaperone for the L4 ribosomal subunit encoded by rpl4A and rpl4B, required for hierarchical ribosome assembly. Shields ribosomal protein L4 until timely release and insertion into the pre-ribosome is possible, once ribosomal protein L18 is present. The chain is Probable assembly chaperone of rpl4 from Schizosaccharomyces pombe (strain 972 / ATCC 24843) (Fission yeast).